The following is a 388-amino-acid chain: Beta-hexosaminidase LpqI (388 aa).

Positions 1–19 (MAFPRTLAILAAAAALVVA) are cleaved as a signal peptide. Cys20 is lipidated: N-palmitoyl cysteine. The S-diacylglycerol cysteine moiety is linked to residue Cys20. Residues Asp123, Arg131, Arg193, and 223-224 (KH) each bind substrate. The Proton donor/acceptor role is filled by His236. Asp311 functions as the Nucleophile in the catalytic mechanism.

This sequence belongs to the glycosyl hydrolase 3 family.

It localises to the cell inner membrane. It carries out the reaction Hydrolysis of terminal non-reducing N-acetyl-D-hexosamine residues in N-acetyl-beta-D-hexosaminides.. Its pathway is cell wall biogenesis; peptidoglycan recycling. Plays a role in peptidoglycan recycling by cleaving the terminal beta-1,4-linked N-acetylglucosamine (GlcNAc) from peptidoglycan fragments. Acts as a regulator for GlcNAc-MurNAc levels by cleaving disaccharides and allowing the breakdown of MurNAc. This chain is Beta-hexosaminidase LpqI, found in Mycobacterium bovis (strain BCG / Pasteur 1173P2).